The primary structure comprises 572 residues: DnaJ protein ERDJ3A (572 aa).

The first 23 residues, 1 to 23 (MVRTRLAISVVLVSTLLLLNVKA), serve as a signal peptide directing secretion. In terms of domain architecture, J spans 27-91 (DPYKVLGVSK…EKRKNYDLYG (65 aa)). Positions 394–423 (ITVKNLKSAVQELGKLLEGLEKKNKKVSSK) form a coiled coil. Residues 419 to 439 (KVSSKSQAGQAPNESSEKIPL) form a disordered region. The span at 422–432 (SKSQAGQAPNE) shows a compositional bias: polar residues. An N-linked (GlcNAc...) asparagine glycan is attached at Asn431.

In terms of assembly, interacts with BIP1 and BIP3. The interaction with BIP1 and BIP3 activates the ATPase enzyme activities of BIP1 and BIP3. Not N-glycosylated. Expressed in roots, leaves, stems, flowers, mature pollen grains and growing pollen tubes.

The protein localises to the endoplasmic reticulum lumen. In terms of biological role, regulates protein folding in the endoplasmic reticulum (ER) lumen. Functions probably as a co-molecular chaperone that is required for normal growth of pollen tubes under high-temperature stress. The protein is DnaJ protein ERDJ3A (ERDJ3A) of Arabidopsis thaliana (Mouse-ear cress).